Here is a 412-residue protein sequence, read N- to C-terminus: Sterol-4-alpha-carboxylate 3-dehydrogenase erg26, decarboxylating (412 aa).

NADP(+) is bound by residues 17–23 (GGCGFLG), 89–90 (DI), and 111–113 (TAT). Substrate is bound by residues S158 and Y188. NADP(+) is bound by residues Y188, K192, and 217–220 (PAGI). The Proton donor role is filled by K192.

The protein belongs to the 3-beta-HSD family. In terms of assembly, heterotetramer of erg25, erg26, erg27 and erg28. Erg28 acts as a scaffold to tether erg27 and other 4,4-demethylation-related enzymes, forming a demethylation enzyme complex, in the endoplasmic reticulum.

The protein resides in the endoplasmic reticulum membrane. It participates in steroid metabolism; ergosterol biosynthesis. Functionally, sterol-C4-methyl oxidase; part of the third module of ergosterol biosynthesis pathway that includes the late steps of the pathway. Erg26 is a catalytic component of the C-4 demethylation complex that catalyzes the conversion of 4,4-dimethylfecosterol into fecosterol via 4-methylfecosterol. The third module or late pathway involves the ergosterol synthesis itself through consecutive reactions that mainly occur in the endoplasmic reticulum (ER) membrane. Firstly, the squalene synthase erg9 catalyzes the condensation of 2 farnesyl pyrophosphate moieties to form squalene, which is the precursor of all steroids. Squalene synthase is crucial for balancing the incorporation of farnesyl diphosphate (FPP) into sterol and nonsterol isoprene synthesis. Secondly, squalene is converted into lanosterol by the consecutive action of the squalene epoxidase erg1 and the lanosterol synthase erg7. Then, the delta(24)-sterol C-methyltransferase erg6 methylates lanosterol at C-24 to produce eburicol. Eburicol is the substrate of the sterol 14-alpha demethylase encoded by cyp51A and cyp51B, to yield 4,4,24-trimethyl ergosta-8,14,24(28)-trienol. The C-14 reductase erg24 then reduces the C14=C15 double bond which leads to 4,4-dimethylfecosterol. A sequence of further demethylations at C-4, involving the C-4 demethylation complex containing the C-4 methylsterol oxidases erg25A or erg25B, the sterol-4-alpha-carboxylate 3-dehydrogenase erg26 and the 3-keto-steroid reductase erg27, leads to the production of fecosterol via 4-methylfecosterol. The C-8 sterol isomerase erg2 then catalyzes the reaction which results in unsaturation at C-7 in the B ring of sterols and thus converts fecosterol to episterol. The sterol-C5-desaturase erg3B then catalyzes the introduction of a C-5 double bond in the B ring to produce 5-dehydroepisterol. The 2 other sterol-C5-desaturases, erg3A and erg3C, seem to be less important in ergosterol biosynthesis. The C-22 sterol desaturase erg5 further converts 5-dehydroepisterol into ergosta-5,7,22,24(28)-tetraen-3beta-ol by forming the C-22(23) double bond in the sterol side chain. Finally, ergosta-5,7,22,24(28)-tetraen-3beta-ol is substrate of the C-24(28) sterol reductases erg4A and erg4B to produce ergosterol. Possible alternative sterol biosynthetic pathways might exist from fecosterol to ergosterol, depending on the activities of the erg3 isoforms. In Aspergillus fumigatus (strain ATCC MYA-4609 / CBS 101355 / FGSC A1100 / Af293) (Neosartorya fumigata), this protein is Sterol-4-alpha-carboxylate 3-dehydrogenase erg26, decarboxylating.